Reading from the N-terminus, the 390-residue chain is Ammonium/H(+) antiporter subunit AmhT (390 aa).

10 consecutive transmembrane segments (helical) span residues 2-22 (VIPE…TGFV), 31-51 (VVIF…SHLL), 52-72 (HFAG…EFPL), 94-114 (FGVT…SLII), 143-163 (FMLG…AVLV), 178-198 (LLVV…VFLF), 212-232 (DLFI…ALYL), 266-286 (LLLP…EGIP), 288-308 (IPLL…VGVL), and 351-371 (VFIL…PSIA).

Belongs to the monovalent cation:proton antiporter 2 (CPA2) transporter (TC 2.A.37) family. Interacts with AmhM.

Its subcellular location is the cell membrane. AmhT alone exhibits antiport activity, but interaction with AmhM confers different properties, such as higher KM for potassium. Functionally, ammonium/proton antiporter that mediates the efflux of ammonium ions. Can also transport potassium or rubidium, but not sodium or lithium. This is Ammonium/H(+) antiporter subunit AmhT (amhT) from Alkalihalophilus pseudofirmus (strain ATCC BAA-2126 / JCM 17055 / OF4) (Bacillus pseudofirmus).